A 183-amino-acid chain; its full sequence is MRILGIDPGLRVTGFGVIDVSGHRLAYVASGVIRTPTADLATRLGTIFQGVSTLVREHAPDQAAIEQVFVNVNPQSTLLLGQARGAAICGLVSGGLPVAEYTALQLKQAVVGYGRATKSQMQEMVTRLLNLTGQPGSDAADALGMAICHAHSGSTLGAIGAIGGLAPALAKKGLRVRRGRLVR.

Active-site residues include Asp7, Glu66, and Asp138. Residues Asp7, Glu66, and Asp138 each coordinate Mg(2+).

The protein belongs to the RuvC family. In terms of assembly, homodimer which binds Holliday junction (HJ) DNA. The HJ becomes 2-fold symmetrical on binding to RuvC with unstacked arms; it has a different conformation from HJ DNA in complex with RuvA. In the full resolvosome a probable DNA-RuvA(4)-RuvB(12)-RuvC(2) complex forms which resolves the HJ. Mg(2+) serves as cofactor.

Its subcellular location is the cytoplasm. It carries out the reaction Endonucleolytic cleavage at a junction such as a reciprocal single-stranded crossover between two homologous DNA duplexes (Holliday junction).. The RuvA-RuvB-RuvC complex processes Holliday junction (HJ) DNA during genetic recombination and DNA repair. Endonuclease that resolves HJ intermediates. Cleaves cruciform DNA by making single-stranded nicks across the HJ at symmetrical positions within the homologous arms, yielding a 5'-phosphate and a 3'-hydroxyl group; requires a central core of homology in the junction. The consensus cleavage sequence is 5'-(A/T)TT(C/G)-3'. Cleavage occurs on the 3'-side of the TT dinucleotide at the point of strand exchange. HJ branch migration catalyzed by RuvA-RuvB allows RuvC to scan DNA until it finds its consensus sequence, where it cleaves and resolves the cruciform DNA. The polypeptide is Crossover junction endodeoxyribonuclease RuvC (Burkholderia ambifaria (strain MC40-6)).